A 579-amino-acid chain; its full sequence is V-type ATP synthase alpha chain (579 aa).

Residue 227-234 (GGFGTGKT) participates in ATP binding.

It belongs to the ATPase alpha/beta chains family.

It catalyses the reaction ATP + H2O + 4 H(+)(in) = ADP + phosphate + 5 H(+)(out). In terms of biological role, produces ATP from ADP in the presence of a proton gradient across the membrane. The V-type alpha chain is a catalytic subunit. The chain is V-type ATP synthase alpha chain from Anaeromyxobacter dehalogenans (strain 2CP-1 / ATCC BAA-258).